A 504-amino-acid polypeptide reads, in one-letter code: 2-methylcitrate dehydratase 2 (504 aa).

It belongs to the PrpD family. As to quaternary structure, monomer.

The enzyme catalyses (2S,3S)-2-methylcitrate = 2-methyl-cis-aconitate + H2O. It carries out the reaction citrate = D-threo-isocitrate. It participates in organic acid metabolism; propanoate degradation. It functions in the pathway carbohydrate metabolism; tricarboxylic acid cycle; isocitrate from oxaloacetate: step 1/2. Its function is as follows. Involved in the catabolism of short chain fatty acids (SCFA) via the 2-methylcitrate cycle I (propionate degradation route). Catalyzes the dehydration of 2-methylcitrate (2-MC) to yield the cis isomer 2-methyl-aconitate. Could also catalyze the dehydration of citrate and the hydration of cis-aconitate. The protein is 2-methylcitrate dehydratase 2 (prpD2) of Corynebacterium glutamicum (strain ATCC 13032 / DSM 20300 / JCM 1318 / BCRC 11384 / CCUG 27702 / LMG 3730 / NBRC 12168 / NCIMB 10025 / NRRL B-2784 / 534).